The primary structure comprises 408 residues: uncharacterized protein (408 aa).

Residues 56-76 form a helical membrane-spanning segment; sequence YWAGPAAASMVAAVTPYVAWL.

It belongs to the mycobacterial PPE family.

It is found in the cell membrane. This is an uncharacterized protein from Mycobacterium bovis (strain ATCC BAA-935 / AF2122/97).